The chain runs to 102 residues: Putative pterin-4-alpha-carbinolamine dehydratase (102 aa).

The protein belongs to the pterin-4-alpha-carbinolamine dehydratase family.

The catalysed reaction is (4aS,6R)-4a-hydroxy-L-erythro-5,6,7,8-tetrahydrobiopterin = (6R)-L-erythro-6,7-dihydrobiopterin + H2O. The protein is Putative pterin-4-alpha-carbinolamine dehydratase of Psychromonas ingrahamii (strain DSM 17664 / CCUG 51855 / 37).